Consider the following 274-residue polypeptide: Putative deoxyribonuclease TATDN1 homolog (274 aa).

Positions 105, 139, 162, and 208 each coordinate a divalent metal cation.

This sequence belongs to the metallo-dependent hydrolases superfamily. TatD-type hydrolase family. A divalent metal cation is required as a cofactor.

The protein resides in the nucleus. Putative deoxyribonuclease. This chain is Putative deoxyribonuclease TATDN1 homolog, found in Enterocytozoon bieneusi (strain H348) (Microsporidian parasite).